Consider the following 383-residue polypeptide: Delta(12) acyl-lipid conjugase (11E,13E-forming) (383 aa).

The tract at residues 1–30 (MGEVGPTNRTKTKLDKQQESENRVPHEPPP) is disordered. Residues 12–26 (TKLDKQQESENRVPH) show a composition bias toward basic and acidic residues. The next 2 membrane-spanning stretches (helical) occupy residues 56 to 76 (VIHD…YIPM) and 84 to 104 (VAWP…LVLG). The Histidine box-1 motif lies at 105–109 (HECGH). The Histidine box-2 motif lies at 141 to 145 (HRRHH). A run of 3 helical transmembrane segments spans residues 179 to 199 (FLMI…FNAN), 225 to 245 (VIAS…IALA), and 249 to 269 (VWLI…IVLI). Positions 315 to 319 (HLVHH) match the Histidine box-3 motif.

Belongs to the fatty acid desaturase type 1 family. Expressed in developing seeds, but not in leaves.

The protein localises to the membrane. It carries out the reaction a (9Z,12Z)-octadecadienoyl-containing glycerolipid + 2 Fe(II)-[cytochrome b5] + O2 + 2 H(+) = a (9Z,11E,13E)-octadecatrienoyl-containing glycerolipid + 2 Fe(III)-[cytochrome b5] + 2 H2O. The catalysed reaction is (9Z,12Z,15Z)-octadecatrienoyl-containing glycerolipid + 2 Fe(II)-[cytochrome b5] + O2 + 2 H(+) = a (9Z,11E,13E,15Z)-octadecatetraenoyl-containing glycerolipid + 2 Fe(III)-[cytochrome b5] + 2 H2O. Its pathway is lipid metabolism; polyunsaturated fatty acid biosynthesis. Its function is as follows. Converts linoleic acid to alpha-eleostearic acid (18:3(9Z,11E,13E)) and alpha-linolenic acid to alpha-parinaric acid (18:4(9Z,11E, 13E, 15Z)). Converts a single cis double bond at carbon 12 to two conjugated trans bonds at positions 11 and 13. This Impatiens balsamina (Balsam) protein is Delta(12) acyl-lipid conjugase (11E,13E-forming).